Reading from the N-terminus, the 433-residue chain is Zinc carboxypeptidase A 1 (433 aa).

The signal sequence occupies residues 1 to 28 (MVRLNSAAGSRWWAPAMAILAVALSVEA). A Peptidase M14 domain is found at 130–423 (DYHTLEEIHA…DSLITLLEES (294 aa)). Zn(2+) is bound by residues H187 and E190. C253 and C276 form a disulfide bridge. A Zn(2+)-binding site is contributed by H312. The Proton donor/acceptor role is filled by E387.

Belongs to the peptidase M14 family. The cofactor is Zn(2+). In terms of tissue distribution, expressed in the posterior midgut in pupae and female adults.

The protein resides in the secreted. Functionally, involved in the digestion of the blood meal. This is Zinc carboxypeptidase A 1 from Anopheles gambiae (African malaria mosquito).